The chain runs to 620 residues: Toxin coregulated pilus biosynthesis protein I (620 aa).

Residues 344 to 580 (TMNDLSIKQT…DVAKQMEDIR (237 aa)) form the Methyl-accepting transducer domain.

It belongs to the methyl-accepting chemotaxis (MCP) protein family.

The protein resides in the cell inner membrane. May function as an environmental regulator of TCP biogenesis. Negatively regulates the synthesis of the major pilin subunit of TCP (TcpA). In Vibrio cholerae serotype O1 (strain ATCC 39541 / Classical Ogawa 395 / O395), this protein is Toxin coregulated pilus biosynthesis protein I (tcpI).